The primary structure comprises 1005 residues: Small G protein signaling modulator 2 (1005 aa).

The RUN domain occupies 34 to 191 (HEDSSHIIAL…EYTKLKTADH (158 aa)). 2 disordered regions span residues 95-121 (QAEG…KAPA) and 205-236 (HRIR…SASE). A phosphoserine mark is found at Ser-402 and Leu-444. Residues 566-938 (GVEHEIRKDV…AVWEVIWAAR (373 aa)) form the Rab-GAP TBC domain. Disordered stretches follow at residues 657–687 (FISV…AGTP) and 729–761 (GFED…QETL). Residues 672 to 681 (EDSKPKREQE) are compositionally biased toward basic and acidic residues. The segment covering 730–740 (FEDDGAGEDGS) has biased composition (acidic residues).

This sequence belongs to the RUTBC family. As to quaternary structure, interacts with RAB4A, RAB11A, RAP1A, RAP1B, RAP2A and RAP2B. No interaction with RAB27A. Interacts with RAB9A. As to expression, widely expressed.

Its subcellular location is the cytoplasm. The protein localises to the melanosome. Possesses GTPase activator activity towards RAB32, RAB33B and RAB38. Regulates the trafficking of melanogenic enzymes TYR, TYRP1 and DCT/TYRP2 to melanosomes in melanocytes by inactivating RAB32 and RAB38. Inhibits RAB32 and RAB38 activation both directly by promoting their GTPase activity and indirectly by disrupting the RAB9A-HPS4 interaction which is required for RAB32/38 activation. The protein is Small G protein signaling modulator 2 (Sgsm2) of Mus musculus (Mouse).